The sequence spans 917 residues: Translation initiation factor IF-2 (917 aa).

The interval 241 to 312 (EEAKKGTLHK…GGWRSGGGRK (72 aa)) is disordered. A compositionally biased stretch (basic and acidic residues) spans 252-262 (AKAEGAEDKKK). Residues 274–283 (SSETSSTWQE) are compositionally biased toward polar residues. Gly residues predominate over residues 298-308 (TSGGVGGWRSG). Residues 415–582 (PRPPVVTVMG…NVLLQAEILE (168 aa)) form the tr-type G domain. The interval 424 to 431 (GHVDHGKT) is G1. 424–431 (GHVDHGKT) lines the GTP pocket. Residues 449 to 453 (GITQH) are G2. The interval 470–473 (DTPG) is G3. GTP-binding positions include 470–474 (DTPGH) and 524–527 (NKID). The interval 524–527 (NKID) is G4. The segment at 560–562 (SAK) is G5.

It belongs to the TRAFAC class translation factor GTPase superfamily. Classic translation factor GTPase family. IF-2 subfamily.

It is found in the cytoplasm. One of the essential components for the initiation of protein synthesis. Protects formylmethionyl-tRNA from spontaneous hydrolysis and promotes its binding to the 30S ribosomal subunits. Also involved in the hydrolysis of GTP during the formation of the 70S ribosomal complex. The polypeptide is Translation initiation factor IF-2 (Polynucleobacter necessarius subsp. necessarius (strain STIR1)).